The primary structure comprises 557 residues: Membrane protein insertase YidC (557 aa).

A helical transmembrane segment spans residues 3–23 (NLRPVLYLSMLLVLFLIWQAW). Residues 34–60 (APGAQEQVMDRDGVPAPPQDVPDAPVS) form a disordered region. Helical transmembrane passes span 366 to 386 (VVGN…LVFY), 436 to 456 (LGGC…YWVL), 480 to 500 (YFIL…LNPA), and 514 to 534 (PFVF…YWFV).

The protein belongs to the OXA1/ALB3/YidC family. Type 1 subfamily. As to quaternary structure, interacts with the Sec translocase complex via SecD. Specifically interacts with transmembrane segments of nascent integral membrane proteins during membrane integration.

Its subcellular location is the cell inner membrane. Functionally, required for the insertion and/or proper folding and/or complex formation of integral membrane proteins into the membrane. Involved in integration of membrane proteins that insert both dependently and independently of the Sec translocase complex, as well as at least some lipoproteins. Aids folding of multispanning membrane proteins. The chain is Membrane protein insertase YidC from Thioalkalivibrio sulfidiphilus (strain HL-EbGR7).